Here is a 202-residue protein sequence, read N- to C-terminus: Small ribosomal subunit protein uS4 (202 aa).

The tract at residues 22-43 is disordered; the sequence is TRKSARRAYPPGQHGQNRKKRS. One can recognise an S4 RNA-binding domain in the interval 90 to 152; it reads MRLDNTVFRL…APSRKLVENN (63 aa).

It belongs to the universal ribosomal protein uS4 family. In terms of assembly, part of the 30S ribosomal subunit. Contacts protein S5. The interaction surface between S4 and S5 is involved in control of translational fidelity.

In terms of biological role, one of the primary rRNA binding proteins, it binds directly to 16S rRNA where it nucleates assembly of the body of the 30S subunit. Functionally, with S5 and S12 plays an important role in translational accuracy. This chain is Small ribosomal subunit protein uS4, found in Trichormus variabilis (strain ATCC 29413 / PCC 7937) (Anabaena variabilis).